We begin with the raw amino-acid sequence, 488 residues long: Thiamine transporter 2 (488 aa).

Topologically, residues 1-8 (MDSSCRTP) are cytoplasmic. Residues 9 to 29 (PSNSWVYPTVILCLFGFFSMF) traverse the membrane as a helical segment. Residues 30 to 54 (RPSEAFLIPFLSEPSKNLTSPEMTN) are Extracellular-facing. Asn46 carries an N-linked (GlcNAc...) asparagine glycan. A helical membrane pass occupies residues 55-75 (EILPVWTYSYLATLPPVFVLT). Residues 76-82 (DYLRYKP) are Cytoplasmic-facing. A helical membrane pass occupies residues 83–103 (VIMLHVVAFATSYLFLLFGQG). Residues 104–111 (VMLMQTAE) are Extracellular-facing. A helical transmembrane segment spans residues 112-132 (FFFGVVSATEIAYFAYIYSMV). The Cytoplasmic segment spans residues 133–145 (SPEHYQKVSSYCR). A helical transmembrane segment spans residues 146–166 (SITLVAYTAGSVLAQLLVSLT). Residues 167-172 (NLPYSS) lie on the Extracellular side of the membrane. The chain crosses the membrane as a helical span at residues 173-193 (LFYISLACVSVAFFFSLFLPM). At 194–276 (PKKSMFFHAK…YSSKHLVYWS (83 aa)) the chain is on the cytoplasmic side. The chain crosses the membrane as a helical span at residues 277–297 (LWWAFATAGYNQILNYVQVLW). Residues 298 to 310 (EHKAPSQDSSIYN) lie on the Extracellular side of the membrane. A helical membrane pass occupies residues 311–331 (GAVEAIATFGGALASFSVGYL). Residues 332-335 (KVNW) lie on the Cytoplasmic side of the membrane. The chain crosses the membrane as a helical span at residues 336–356 (DLLGELGLAVFSAVIAGSLFL). The Extracellular segment spans residues 357 to 369 (MNYSRSIWVCYAG). N-linked (GlcNAc...) asparagine glycosylation is present at Asn358. A helical transmembrane segment spans residues 370–390 (YLLVKSSYSFLITIAVFQIAV). Residues 391-399 (NLSLERYAL) lie on the Cytoplasmic side of the membrane. Residues 400–420 (VFGIDTFIALVIQTIMTMIVV) form a helical membrane-spanning segment. Residues 421-428 (DQRGLQLP) are Extracellular-facing. The chain crosses the membrane as a helical span at residues 429-449 (VTTQFLVYGSYFAVIAGVFLM). Residues 450–488 (RSIYILCSAKCRKEVQNLATTRSPNEPHPQEPSNVSTKF) lie on the Cytoplasmic side of the membrane. Residues 469–488 (TTRSPNEPHPQEPSNVSTKF) form a disordered region.

The protein belongs to the reduced folate carrier (RFC) transporter (TC 2.A.48) family. High expression in kidney, brain, lung and small intestine. Detected in pancreatic acinar cells (at protein level). Also expressed strongly in pancreatic islet cells.

Its subcellular location is the membrane. The enzyme catalyses thiamine(out) + H(+)(in) = thiamine(in) + H(+)(out). Functionally, high-affinity transporter for the intake of thiamine. Unlike the human ortholog, lacks H(+)-dependent pyridoxine transport activity due to an absence of seven critical amino-acids required for pyridoxine transport. This Mus musculus (Mouse) protein is Thiamine transporter 2 (Slc19a3).